Reading from the N-terminus, the 98-residue chain is Ferredoxin-like protein (98 aa).

This sequence to ferredoxins from P.putida and C.tartarivorum, ferredoxin I from A.vinelandii, ferredoxin II from D.desulfuricans.

In terms of biological role, could be a 3Fe-4S cluster-containing protein. The protein is Ferredoxin-like protein (fixX) of Rhizobium leguminosarum bv. trifolii.